The following is a 568-amino-acid chain: Circadian clock protein KaiC2 (568 aa).

KaiC domains are found at residues 11–250 (IKCP…SVSQ) and 251–485 (ERIS…LTGT). A phosphoserine; by autocatalysis mark is found at Ser423 and Ser424.

The protein belongs to the KaiC family. As to quaternary structure, multimerizes, probably forming homohexamers, no interaction with KaiC1 or KaiC3 is seen.

The catalysed reaction is L-seryl-[protein] + ATP = O-phospho-L-seryl-[protein] + ADP + H(+). It catalyses the reaction L-threonyl-[protein] + ATP = O-phospho-L-threonyl-[protein] + ADP + H(+). The enzyme catalyses ATP + H2O = ADP + phosphate + H(+). Its function is as follows. Autophosphorylates independently of KaiA. In Synechocystis sp. (strain ATCC 27184 / PCC 6803 / Kazusa), this protein is Circadian clock protein KaiC2.